A 405-amino-acid chain; its full sequence is Cytoplasmic tRNA 2-thiolation protein 2 (405 aa).

Belongs to the CTU2/NCS2 family.

The protein resides in the cytoplasm. The protein operates within tRNA modification; 5-methoxycarbonylmethyl-2-thiouridine-tRNA biosynthesis. In terms of biological role, plays a central role in 2-thiolation of mcm(5)S(2)U at tRNA wobble positions of tRNA(Lys), tRNA(Glu) and tRNA(Gln). May act by forming a heterodimer with NCS6/CTU1 that ligates sulfur from thiocarboxylated URM1 onto the uridine of tRNAs at wobble position. The sequence is that of Cytoplasmic tRNA 2-thiolation protein 2 from Drosophila pseudoobscura pseudoobscura (Fruit fly).